A 494-amino-acid polypeptide reads, in one-letter code: Bifunctional pantoate ligase/cytidylate kinase (494 aa).

The segment at 1–258 (MHFVPTMGGL…CGSTRLIDHA (258 aa)) is pantoate--beta-alanine ligase. Residue 7 to 14 (MGGLHHGH) coordinates ATP. Catalysis depends on H14, which acts as the Proton donor. Q41 lines the (R)-pantoate pocket. Q41 serves as a coordination point for beta-alanine. 130–133 (GEKD) contacts ATP. Residue Q136 coordinates (R)-pantoate. Residues V159 and 167-170 (SSSR) each bind ATP. Positions 259-494 (FLMTRSPLVA…VGEEVWPTPV (236 aa)) are cytidylate kinase.

In the N-terminal section; belongs to the pantothenate synthetase family. The protein in the C-terminal section; belongs to the cytidylate kinase family. Type 1 subfamily.

The protein resides in the cytoplasm. The enzyme catalyses (R)-pantoate + beta-alanine + ATP = (R)-pantothenate + AMP + diphosphate + H(+). The catalysed reaction is CMP + ATP = CDP + ADP. It carries out the reaction dCMP + ATP = dCDP + ADP. It functions in the pathway cofactor biosynthesis; (R)-pantothenate biosynthesis; (R)-pantothenate from (R)-pantoate and beta-alanine: step 1/1. Its function is as follows. Catalyzes the condensation of pantoate with beta-alanine in an ATP-dependent reaction via a pantoyl-adenylate intermediate. Functionally, catalyzes the transfer of a phosphate group from ATP to either CMP or dCMP to form CDP or dCDP and ADP, respectively. In Synechococcus sp. (strain CC9311), this protein is Bifunctional pantoate ligase/cytidylate kinase.